The chain runs to 304 residues: Quinolinate synthase (304 aa).

Iminosuccinate is bound by residues His24 and Ser41. Cys86 is a binding site for [4Fe-4S] cluster. Iminosuccinate-binding positions include 112–114 and Ser129; that span reads YVN. A [4Fe-4S] cluster-binding site is contributed by Cys171. Iminosuccinate-binding positions include 197–199 and Thr214; that span reads HPE. [4Fe-4S] cluster is bound at residue Cys259.

It belongs to the quinolinate synthase family. Type 2 subfamily. It depends on [4Fe-4S] cluster as a cofactor.

It is found in the cytoplasm. The catalysed reaction is iminosuccinate + dihydroxyacetone phosphate = quinolinate + phosphate + 2 H2O + H(+). It participates in cofactor biosynthesis; NAD(+) biosynthesis; quinolinate from iminoaspartate: step 1/1. Functionally, catalyzes the condensation of iminoaspartate with dihydroxyacetone phosphate to form quinolinate. The sequence is that of Quinolinate synthase from Geotalea uraniireducens (strain Rf4) (Geobacter uraniireducens).